The chain runs to 332 residues: MNITTLTNSISTSSFSPNNTNGSSTETVNSDIKTTTSSHPVSSLTMLNDTLHNIRTTNQALKKELSQKTLTKTSLEEIALHSSQISMDVNKSAQLLDILSRNEYPINKDARELLHSAPKEAELDGDQMISHRELWAKIANSINDINEQYLKVYEHAVSSYTQMYQDFSAVLSSLAGWISPGGNDGNSVKLQVNSLKKALEELKEKYKDKPLYPANNTVSQEQANKWLTELGGTIGKVSQKNGGYVVSINMTPIDNMLKSLDNLGGNGEVVLDNAKYQAWNAGFSAEDETMKNNLQTLVQKYSNANSIFDNLVKVLSSTISSCTDTDKLFLHF.

Residues 1–25 are compositionally biased toward low complexity; the sequence is MNITTLTNSISTSSFSPNNTNGSST. The segment at 1–43 is disordered; sequence MNITTLTNSISTSSFSPNNTNGSSTETVNSDIKTTTSSHPVSS. The segment covering 26 to 43 has biased composition (polar residues); the sequence is ETVNSDIKTTTSSHPVSS. Residues 44–77 are a coiled coil; the sequence is LTMLNDTLHNIRTTNQALKKELSQKTLTKTSLEE. The interval 192–267 is ipaB binding; it reads VNSLKKALEE…KSLDNLGGNG (76 aa).

This sequence belongs to the invasin protein D family.

The protein localises to the secreted. Required for bacterial invasion of host cells. Controls IpaB and IpaC secretion, and the efficiency with which they are physically inserted into target cell membranes. These proteins are exported via T3SS to form a pore in the host membrane that allows the translocation of the other effectors into the host cytoplasm. Along with IpaB, is essential for both blocking secretion through the Mxi/Spa translocon in the absence of a secretion-inducing signal, and for controlling the level of secretion in the presence of this signal. This is Invasin IpaD (ipaD) from Shigella flexneri.